The sequence spans 491 residues: MATQWEVVIGLETHAQLSTVSKIFSGASTQFGAEPNTQACPVDLALPGVLPVLNRGAVERAIRFGLAIGSTIAPRSIFARKNYFYPDLPKGYQISQYEIPVVQGGQITIQVPANEKAGKAAYEKTVNLTRAHLEEDAGKSLHEDFAGMTGIDLNRAGTPLLEIVTEPEMRSAAEAVAYAKALHGLVVWLGICDGNMQEGSFRCDANVSVRPVGQEKFGTRAEIKNLNSFRFLEEAINYEVRRQIELIEDGGEVVQETRLYDPDKRETRSMRSKEDAHDYRYFPDPDLMPLVIGQDWIERVQSGMPELPAAMQQRFVDEYGVSAYDAGVLTSSKAMAAYFEAVVAKAGAANAKIAANWLMGDVSSQLNRDGIEIDAIPVSAAQLALLLQRIADGTISNKIAKEIFATIWDEKATDEGAADRIIDAKGLKQISDTGALEAIIDEVLAANAKSVEEFRAGKEKAFNALIGQAMKATKGKANPQQVNELLKKKLG.

It belongs to the GatB/GatE family. GatB subfamily. As to quaternary structure, heterotrimer of A, B and C subunits.

The catalysed reaction is L-glutamyl-tRNA(Gln) + L-glutamine + ATP + H2O = L-glutaminyl-tRNA(Gln) + L-glutamate + ADP + phosphate + H(+). The enzyme catalyses L-aspartyl-tRNA(Asn) + L-glutamine + ATP + H2O = L-asparaginyl-tRNA(Asn) + L-glutamate + ADP + phosphate + 2 H(+). Allows the formation of correctly charged Asn-tRNA(Asn) or Gln-tRNA(Gln) through the transamidation of misacylated Asp-tRNA(Asn) or Glu-tRNA(Gln) in organisms which lack either or both of asparaginyl-tRNA or glutaminyl-tRNA synthetases. The reaction takes place in the presence of glutamine and ATP through an activated phospho-Asp-tRNA(Asn) or phospho-Glu-tRNA(Gln). The polypeptide is Aspartyl/glutamyl-tRNA(Asn/Gln) amidotransferase subunit B (Burkholderia cenocepacia (strain ATCC BAA-245 / DSM 16553 / LMG 16656 / NCTC 13227 / J2315 / CF5610) (Burkholderia cepacia (strain J2315))).